A 233-amino-acid polypeptide reads, in one-letter code: Orotidine 5'-phosphate decarboxylase (233 aa).

Substrate contacts are provided by residues Asp-9, Lys-31, 58–67, Thr-120, Arg-182, Gln-191, Gly-211, and Arg-212; that span reads DLKLHDIPNT. Lys-60 acts as the Proton donor in catalysis.

It belongs to the OMP decarboxylase family. Type 1 subfamily. In terms of assembly, homodimer.

It carries out the reaction orotidine 5'-phosphate + H(+) = UMP + CO2. It participates in pyrimidine metabolism; UMP biosynthesis via de novo pathway; UMP from orotate: step 2/2. Its function is as follows. Catalyzes the decarboxylation of orotidine 5'-monophosphate (OMP) to uridine 5'-monophosphate (UMP). The polypeptide is Orotidine 5'-phosphate decarboxylase (Listeria monocytogenes serotype 4b (strain CLIP80459)).